A 443-amino-acid chain; its full sequence is MSEMTPREIVSELDSYIIGQHKAKRAVSIALRNRWRRMQLDEALRHEVTPKNILMIGPTGVGKTEIARRLAKLANAPFIKVEATKFTEVGYVGKEVDSIIRDLTDSAIKMVRLQSIEKNRFRAEEMAEDRILDVLIPPAKNNWGQAESTPEPSAARQAFRKKLREGQLDDKEIEIDLAAAPVGVEIMAPPGMEEMTNQLQSMFQNLAGQKQKARKIKIKDAFKLLIEEEAAKLVNPEELKQQAIEAVEQHGIVFIDEIDKICKRGESSGPDVSREGVQRDLLPLVEGCTVSTKHGMVKTDHILFIASGAFQVASPSDLIPELQGRLPIRVELQALTTEDFERILTEPSASLTEQYKALMATEGVDISFTADGIRRIAEAAWQVNESTENIGARRLHTVMERLIEDVSYDASEMNGQSVTIDADYVRNHLDELVADEDLSRFIL.

Residues Ile18, 60 to 65 (GVGKTE), Asp256, Glu321, and Arg393 contribute to the ATP site.

It belongs to the ClpX chaperone family. HslU subfamily. A double ring-shaped homohexamer of HslV is capped on each side by a ring-shaped HslU homohexamer. The assembly of the HslU/HslV complex is dependent on binding of ATP.

The protein localises to the cytoplasm. In terms of biological role, ATPase subunit of a proteasome-like degradation complex; this subunit has chaperone activity. The binding of ATP and its subsequent hydrolysis by HslU are essential for unfolding of protein substrates subsequently hydrolyzed by HslV. HslU recognizes the N-terminal part of its protein substrates and unfolds these before they are guided to HslV for hydrolysis. In Pectobacterium carotovorum subsp. carotovorum (strain PC1), this protein is ATP-dependent protease ATPase subunit HslU.